Consider the following 144-residue polypeptide: L-fucose mutarotase (144 aa).

Histidine 22 serves as the catalytic Proton donor. Substrate-binding positions include aspartate 30, arginine 109, and 131–133; that span reads YGN.

This sequence belongs to the RbsD / FucU family. FucU mutarotase subfamily. In terms of assembly, homodecamer.

It is found in the cytoplasm. It catalyses the reaction alpha-L-fucose = beta-L-fucose. It participates in carbohydrate metabolism; L-fucose metabolism. Functionally, involved in the anomeric conversion of L-fucose. This Haemophilus influenzae (strain PittGG) protein is L-fucose mutarotase.